A 35-amino-acid polypeptide reads, in one-letter code: Dolichyl-diphosphooligosaccharide--protein glycosyltransferase subunit 4C (35 aa).

Residues 1–8 are Lumenal-facing; that stretch reads MFDDQDLG. A helical membrane pass occupies residues 9 to 29; sequence FFANFLGIFIFILVIAYHFVM. At 30 to 35 the chain is on the cytoplasmic side; it reads ADPKFE.

Belongs to the OST4 family. Component of the oligosaccharyltransferase (OST) complex.

Its subcellular location is the endoplasmic reticulum membrane. In terms of biological role, subunit of the oligosaccharyl transferase (OST) complex that catalyzes the initial transfer of a defined glycan (Glc(3)Man(9)GlcNAc(2) in eukaryotes) from the lipid carrier dolichol-pyrophosphate to an asparagine residue within an Asn-X-Ser/Thr consensus motif in nascent polypeptide chains, the first step in protein N-glycosylation. N-glycosylation occurs cotranslationally and the complex associates with the Sec61 complex at the channel-forming translocon complex that mediates protein translocation across the endoplasmic reticulum (ER). All subunits are required for a maximal enzyme activity. The chain is Dolichyl-diphosphooligosaccharide--protein glycosyltransferase subunit 4C (OST4C) from Arabidopsis thaliana (Mouse-ear cress).